Consider the following 276-residue polypeptide: Bis(5'-nucleosyl)-tetraphosphatase, symmetrical (276 aa).

This sequence belongs to the Ap4A hydrolase family.

It catalyses the reaction P(1),P(4)-bis(5'-adenosyl) tetraphosphate + H2O = 2 ADP + 2 H(+). In terms of biological role, hydrolyzes diadenosine 5',5'''-P1,P4-tetraphosphate to yield ADP. This is Bis(5'-nucleosyl)-tetraphosphatase, symmetrical from Dechloromonas aromatica (strain RCB).